The primary structure comprises 624 residues: tRNA uridine 5-carboxymethylaminomethyl modification enzyme MnmG (624 aa).

An FAD-binding site is contributed by Gly14 to Gly19. Gly273 to Phe287 provides a ligand contact to NAD(+).

The protein belongs to the MnmG family. As to quaternary structure, homodimer. Heterotetramer of two MnmE and two MnmG subunits. It depends on FAD as a cofactor.

The protein localises to the cytoplasm. In terms of biological role, NAD-binding protein involved in the addition of a carboxymethylaminomethyl (cmnm) group at the wobble position (U34) of certain tRNAs, forming tRNA-cmnm(5)s(2)U34. This Syntrophomonas wolfei subsp. wolfei (strain DSM 2245B / Goettingen) protein is tRNA uridine 5-carboxymethylaminomethyl modification enzyme MnmG.